Consider the following 135-residue polypeptide: Sex-regulated protein janus-A (135 aa).

Lys-37 lines the substrate pocket. His-63 acts as the Proton acceptor in catalysis. 104–106 provides a ligand contact to substrate; sequence SQG.

This sequence belongs to the janus family.

JanA and janB regulate somatic sex differentiation. In Drosophila erecta (Fruit fly), this protein is Sex-regulated protein janus-A (janA).